Here is a 196-residue protein sequence, read N- to C-terminus: uncharacterized protein (196 aa).

The segment covering 1-10 (MPGMVPPHVP) has biased composition (pro residues). Disordered regions lie at residues 1-118 (MPGM…EGSG) and 176-196 (TEQA…SAPG). Over residues 25–45 (PVAPQVPSPGGAPGQGPYPYS) the composition is skewed to low complexity. The span at 54-69 (LDTSGKNLTEQNSYSN) shows a compositional bias: polar residues.

This is an uncharacterized protein from Homo sapiens (Human).